The sequence spans 89 residues: Small ribosomal subunit protein uS14 (89 aa).

This sequence belongs to the universal ribosomal protein uS14 family. Part of the 30S ribosomal subunit. Contacts proteins S3 and S10.

In terms of biological role, binds 16S rRNA, required for the assembly of 30S particles and may also be responsible for determining the conformation of the 16S rRNA at the A site. The sequence is that of Small ribosomal subunit protein uS14 from Shouchella clausii (strain KSM-K16) (Alkalihalobacillus clausii).